The following is a 222-amino-acid chain: Apoptosis regulator OPG045 (222 aa).

This sequence belongs to the orthopoxvirus OPG045 family. In terms of assembly, homodimer. Interacts with host pro-apoptotic protein BCL2L11 (via BH3 domain). Interacts with host NLRP1. Interacts with host BAK.

Its subcellular location is the host mitochondrion outer membrane. The protein resides in the host cytoplasm. Its function is as follows. Plays a role in evading host innate immune response by inhibiting host inflammasome activation. Interacts with and inhibits NLR-mediated interleukin-1 beta/IL1B production in infected cells. At the host mitochondria outer membrane, interacts with the BH3 domain of host BAK and prevents BAK from binding active BAX. In turn, host apoptosis is inhibited. In Homo sapiens (Human), this protein is Apoptosis regulator OPG045 (OPG045).